The sequence spans 312 residues: Ribonuclease HIII (312 aa).

Residues 95 to 311 (FNCIGSDEAG…REKAQKILKP (217 aa)) enclose the RNase H type-2 domain. Positions 101, 102, and 206 each coordinate a divalent metal cation.

It belongs to the RNase HII family. RnhC subfamily. Requires Mn(2+) as cofactor. The cofactor is Mg(2+).

The protein localises to the cytoplasm. The catalysed reaction is Endonucleolytic cleavage to 5'-phosphomonoester.. Endonuclease that specifically degrades the RNA of RNA-DNA hybrids. The polypeptide is Ribonuclease HIII (Staphylococcus aureus (strain Mu3 / ATCC 700698)).